Reading from the N-terminus, the 846-residue chain is Disrupted in schizophrenia 1 homolog (846 aa).

Disordered regions lie at residues Met-1–Leu-53, His-127–Gly-147, Glu-231–Arg-257, Thr-277–Gly-312, and Leu-409–Ser-436. The interval Met-1 to Val-288 is interaction with MAP1A. 2 stretches are compositionally biased toward basic and acidic residues: residues Gly-133–Thr-143 and Gly-248–Arg-257. Over residues Thr-277–Ala-300 the composition is skewed to polar residues. An interaction with TRAF3IP1 region spans residues Ser-289–Glu-686. A required for localization to punctate cytoplasmic foci region spans residues Arg-429–Ser-587. Residues Asp-435 to Asp-846 are necessary and sufficient for interaction with PCNT and localization at the centrosome. Residues Leu-440–Trp-489 adopt a coiled-coil conformation. The interval Gly-588–Asp-846 is interaction with ATF4 and ATF5. Residues Thr-721–Asp-846 are interaction with NDEL1 and PAFAH1B1. An interaction with PAFAH1B1 region spans residues Thr-721–Asp-846. Residues Gly-795–Ala-828 are interaction with NDEL1.

In terms of assembly, interacts with NDEL1. Interacts with CCDC88A (via C-terminus); the interaction is direct. Interacts with GSK3B. Interacts with tubulin alpha, ACTN2, ANKHD1, ATF4, ATF5, CEP63, EIF3S3, MAP1A, NDEL1, PAFAH1B1, RANBP9, SPTBN4, SYNE1 and TRAF3IP1. Interaction with microtubules may be mediated in part by TRAF3IP1. Interacts (via C-terminal) with PCNT. Interacts with CHCHD6. Interacts with CCDC141. Interacts with FBXW7, the substrate-recognition component of a SCF (SKP1-CUL1-F-box protein) E3 ubiquitin-protein ligase complex; the interaction targets DISC1 for proteasomal degradation. Interacts with ZNF365. Interacts with ATF4; inhibiting ATF4 transcription factor activity by disrupting ATF4 dimerization and DNA-binding. Interacts with PDE4B. In terms of processing, ubiquitinated. Ubiquitination with 'Lys-48'-linked polyubiquitin chains leads to its proteasomal degradation. As to expression, expressed in brain, heart, kidney, liver and thymus. Within the brain expression is high in the cerebral cortex, hippocampus and olfactory bulb and is also seen at lower levels in the cerebellum (at protein level).

The protein localises to the cytoplasm. It is found in the cytoskeleton. Its subcellular location is the mitochondrion. The protein resides in the microtubule organizing center. It localises to the centrosome. The protein localises to the postsynaptic density. In terms of biological role, involved in the regulation of multiple aspects of embryonic and adult neurogenesis. Required for neural progenitor proliferation in the ventrical/subventrical zone during embryonic brain development and in the adult dentate gyrus of the hippocampus. Participates in the Wnt-mediated neural progenitor proliferation as a positive regulator by modulating GSK3B activity and CTNNB1 abundance. Plays a role as a modulator of the AKT-mTOR signaling pathway controlling the tempo of the process of newborn neurons integration during adult neurogenesis, including neuron positioning, dendritic development and synapse formation. Inhibits the activation of AKT-mTOR signaling upon interaction with CCDC88A. Regulates the migration of early-born granule cell precursors toward the dentate gyrus during the hippocampal development. Inhibits ATF4 transcription factor activity in neurons by disrupting ATF4 dimerization and DNA-binding. Plays a role, together with PCNT, in the microtubule network formation. In Rattus norvegicus (Rat), this protein is Disrupted in schizophrenia 1 homolog.